A 347-amino-acid polypeptide reads, in one-letter code: Protein RecA (347 aa).

67 to 74 (GPESSGKT) lines the ATP pocket.

This sequence belongs to the RecA family.

It is found in the cytoplasm. In terms of biological role, can catalyze the hydrolysis of ATP in the presence of single-stranded DNA, the ATP-dependent uptake of single-stranded DNA by duplex DNA, and the ATP-dependent hybridization of homologous single-stranded DNAs. It interacts with LexA causing its activation and leading to its autocatalytic cleavage. This Sulfurovum sp. (strain NBC37-1) protein is Protein RecA.